The chain runs to 803 residues: Early 94 kDa protein (803 aa).

The polypeptide is Early 94 kDa protein (Lepidoptera (butterflies and moths)).